We begin with the raw amino-acid sequence, 298 residues long: Tritrans,polycis-undecaprenyl-diphosphate synthase (geranylgeranyl-diphosphate specific) (298 aa).

Asp35 is an active-site residue. Asp35 serves as a coordination point for Mg(2+). Residues 36 to 39 (GNRR), Arg48, His52, and 80 to 82 (STE) each bind substrate. The active-site Proton acceptor is Asn83. Substrate is bound by residues Phe84, Arg86, Arg208, and 214-216 (RIS).

This sequence belongs to the UPP synthase family. Homodimer. The cofactor is Mg(2+).

The catalysed reaction is geranylgeranyl diphosphate + 7 isopentenyl diphosphate = tri-trans,hepta-cis-undecaprenyl diphosphate + 7 diphosphate. Its function is as follows. Catalyzes the sequential condensation of isopentenyl diphosphate (IPP) with geranylgeranyl diphosphate (GGPP) to yield (2Z,6Z,10Z,14Z,18Z,22Z,26Z,30E,34E,38E)-undecaprenyl diphosphate (tritrans,heptacis-UPP). It is probably the precursor of glycosyl carrier lipids. This is Tritrans,polycis-undecaprenyl-diphosphate synthase (geranylgeranyl-diphosphate specific) from Methanosarcina mazei (strain ATCC BAA-159 / DSM 3647 / Goe1 / Go1 / JCM 11833 / OCM 88) (Methanosarcina frisia).